A 257-amino-acid polypeptide reads, in one-letter code: Phosphonates import ATP-binding protein PhnC (257 aa).

Residues 4–248 enclose the ABC transporter domain; that stretch reads IKFKNVSKVY…VFSKIYGRTI (245 aa). 37 to 44 is an ATP binding site; the sequence is GLSGAGKS.

Belongs to the ABC transporter superfamily. Phosphonates importer (TC 3.A.1.9.1) family. The complex is composed of two ATP-binding proteins (PhnC), two transmembrane proteins (PhnE) and a solute-binding protein (PhnD).

The protein resides in the cell membrane. It catalyses the reaction phosphonate(out) + ATP + H2O = phosphonate(in) + ADP + phosphate + H(+). Functionally, part of the ABC transporter complex PhnCDE involved in phosphonates import. Responsible for energy coupling to the transport system. The chain is Phosphonates import ATP-binding protein PhnC from Staphylococcus aureus (strain MRSA252).